Here is a 531-residue protein sequence, read N- to C-terminus: Muscarinic acetylcholine receptor M5 (531 aa).

Residues 1–28 (MEGESYNESTVNGTPVNHQALERHGLWE) lie on the Extracellular side of the membrane. A glycan (N-linked (GlcNAc...) asparagine) is linked at Asn7. A helical transmembrane segment spans residues 29–52 (VITIAVVTAVVSLMTIVGNVLVMI). At 53-65 (SFKVNSQLKTVNN) the chain is on the cytoplasmic side. A helical membrane pass occupies residues 66 to 86 (YYLLSLACADLIIGIFSMNLY). Residues 87-103 (TTYILMGRWVLGSLACD) lie on the Extracellular side of the membrane. Cys102 and Cys182 are oxidised to a cystine. Residues 104–125 (LWLALDYVASNASVMNLLVISF) form a helical membrane-spanning segment. At 126 to 145 (DRYFSITRPLTYRAKRTPKR) the chain is on the cytoplasmic side. A helical transmembrane segment spans residues 146–168 (AGIMIGLAWLVSFILWAPAILCW). The Extracellular segment spans residues 169 to 190 (QYLVGKRTVPPDECQIQFLSEP). The helical transmembrane segment at 191–213 (TITFGTAIAAFYIPVSVMTILYC) threads the bilayer. At 214-442 (RIYRETEKRT…LVKERKAAQT (229 aa)) the chain is on the cytoplasmic side. Disordered stretches follow at residues 259-295 (SLAQ…DWEK) and 327-346 (EAKE…ETVV). The segment covering 267 to 287 (QASWSSSRRSTSTTGKTTQAT) has biased composition (low complexity). Residues 334–346 (KESNTQETKETVV) are compositionally biased toward polar residues. Residues 443–463 (LSAILLAFIITWTPYNIMVLV) form a helical membrane-spanning segment. Topologically, residues 464–477 (STFCDKCVPVTLWH) are extracellular. Residues 478 to 497 (LGYWLCYVNSTINPICYALC) traverse the membrane as a helical segment. At 498–531 (NRTFRKTFKLLLLCRWKKKKVEEKLYWQGNSKLP) the chain is on the cytoplasmic side. Residues Thr500 and Thr504 each carry the phosphothreonine modification.

The protein belongs to the G-protein coupled receptor 1 family. Muscarinic acetylcholine receptor subfamily. CHRM5 sub-subfamily.

It localises to the cell membrane. It is found in the postsynaptic cell membrane. Functionally, the muscarinic acetylcholine receptor mediates various cellular responses, including inhibition of adenylate cyclase, breakdown of phosphoinositides and modulation of potassium channels through the action of G proteins. Primary transducing effect is Pi turnover. The protein is Muscarinic acetylcholine receptor M5 (Chrm5) of Rattus norvegicus (Rat).